The following is a 445-amino-acid chain: 8-amino-7-oxononanoate synthase (445 aa).

Substrate is bound at residue arginine 40. Pyridoxal 5'-phosphate is bound at residue 131-132; that stretch reads GY. Histidine 156 provides a ligand contact to substrate. Positions 202, 230, and 258 each coordinate pyridoxal 5'-phosphate. At lysine 261 the chain carries N6-(pyridoxal phosphate)lysine. Threonine 377 serves as a coordination point for substrate. Residues 408–445 form a disordered region; the sequence is ASEGQTRRDAEQPPRSLRSLPPEGAAASLGAARRETAA.

It belongs to the class-II pyridoxal-phosphate-dependent aminotransferase family. BioF subfamily. As to quaternary structure, homodimer. Requires pyridoxal 5'-phosphate as cofactor.

It carries out the reaction 6-carboxyhexanoyl-[ACP] + L-alanine + H(+) = (8S)-8-amino-7-oxononanoate + holo-[ACP] + CO2. It participates in cofactor biosynthesis; biotin biosynthesis. In terms of biological role, catalyzes the decarboxylative condensation of pimeloyl-[acyl-carrier protein] and L-alanine to produce 8-amino-7-oxononanoate (AON), [acyl-carrier protein], and carbon dioxide. This Burkholderia ambifaria (strain MC40-6) protein is 8-amino-7-oxononanoate synthase.